The chain runs to 716 residues: MIELSSEARAIVEGRHSDPFHYLGRHRENDRQVVRAYLPEASDVRVVDEHGGETTLTRIHDAGLFLGDLPNGAKRYRLRARFGADTVELEDPYRFPPILSDFDLYLLGEGTDQRLYDKLGAHPITMDGVGGTGFVVLAPNARAVAVVGDFNCWDRRRHPMRVRGNGYWELFIPGAQTGDRYKFAITDKSGSLLPLKSDPMAFAAEVRPNTASIVVDEAALPCPTPAAATINARRAPISIYEVHLGSWRRGDDNRWLSYRELADTLPRYASSLGFTHIELMPVNEHPFDGSWGYQPTGLYAPTSRFGSPDDFAHLVDACHREGLGVLLDWVPGHFPDDPHGLGHFDGTAFYEHANPLQGRHLDWDTLIYNYGRTEVVNFLVANALFWLDRYGLDGLRVDAVASMLYLDYSRAEGGWIPNKHGGRENLEAIAFLRRFNREVFAKFPHATTIAEESTAWPQVSRPIEFGGLGFGYKWNMGWMHDTLDYIGKDPIYRKHHHGQILFGLHYAFSENFILPLSHDEVVHEKRSILGRMPGDDWQRFANLRAYYAFMFGHPGKKLMFMGAEFGQEREWNHDHALDWHLLDQARHQGVQAVVRDLNALYRDVPALHELDCDPAGFEWIMANDADRSVFAWMRKGESGRARCLVIANFTPTVHRSYRVRVPFAGKWREALNTDSAHYGGSNVGNNGVVETLDGVIPELSLTLPPLAVIFLVPERA.

The Nucleophile role is filled by Asp-398. Glu-451 (proton donor) is an active-site residue.

This sequence belongs to the glycosyl hydrolase 13 family. GlgB subfamily. Monomer.

The enzyme catalyses Transfers a segment of a (1-&gt;4)-alpha-D-glucan chain to a primary hydroxy group in a similar glucan chain.. The protein operates within glycan biosynthesis; glycogen biosynthesis. Its function is as follows. Catalyzes the formation of the alpha-1,6-glucosidic linkages in glycogen by scission of a 1,4-alpha-linked oligosaccharide from growing alpha-1,4-glucan chains and the subsequent attachment of the oligosaccharide to the alpha-1,6 position. The protein is 1,4-alpha-glucan branching enzyme GlgB of Nitrobacter hamburgensis (strain DSM 10229 / NCIMB 13809 / X14).